A 386-amino-acid chain; its full sequence is SWI/SNF-related matrix-associated actin-dependent regulator of chromatin subfamily B member 1 (386 aa).

A DNA-binding region spans residues methionine 1–serine 114.

It belongs to the SNF5 family. Component of the multiprotein chromatin-remodeling complexes SWI/SNF. Component of neural progenitors-specific chromatin remodeling complex (npBAF complex) and the neuron-specific chromatin remodeling complex (nBAF complex). Component of the BAF (SWI/SNF) chromatin remodeling complex. Component of the SWI/SNF-B (PBAF) chromatin remodeling complex. Binds to double-stranded DNA.

The protein resides in the nucleus. Its function is as follows. Involved in chromatin-remodeling. Core component of the BAF (SWI/SNF) complex. This ATP-dependent chromatin-remodeling complex plays important roles in cell proliferation and differentiation, in cellular antiviral activities and inhibition of tumor formation. Belongs to the neural progenitors-specific chromatin remodeling complex (npBAF complex) and the neuron-specific chromatin remodeling complex (nBAF complex) and may play a role in neural development. The chain is SWI/SNF-related matrix-associated actin-dependent regulator of chromatin subfamily B member 1 (SMARCB1) from Gallus gallus (Chicken).